The primary structure comprises 272 residues: Sulfate transporter CysZ (272 aa).

4 helical membrane passes run 29 to 49 (FVII…WLFI), 66 to 86 (WLSF…LLLF), 148 to 168 (IIAL…VPVL), and 219 to 239 (FVPV…TLMW).

The protein belongs to the CysZ family.

The protein localises to the cell inner membrane. In terms of biological role, high affinity, high specificity proton-dependent sulfate transporter, which mediates sulfate uptake. Provides the sulfur source for the cysteine synthesis pathway. The protein is Sulfate transporter CysZ of Haemophilus influenzae (strain 86-028NP).